Here is a 156-residue protein sequence, read N- to C-terminus: 6,7-dimethyl-8-ribityllumazine synthase (156 aa).

5-amino-6-(D-ribitylamino)uracil contacts are provided by residues Phe-22, 57-59 (AYE), and 81-83 (TVI). 86–87 (GT) lines the (2S)-2-hydroxy-3-oxobutyl phosphate pocket. Catalysis depends on His-89, which acts as the Proton donor. Phe-114 lines the 5-amino-6-(D-ribitylamino)uracil pocket. Arg-128 provides a ligand contact to (2S)-2-hydroxy-3-oxobutyl phosphate.

The protein belongs to the DMRL synthase family. In terms of assembly, forms an icosahedral capsid composed of 60 subunits, arranged as a dodecamer of pentamers.

It carries out the reaction (2S)-2-hydroxy-3-oxobutyl phosphate + 5-amino-6-(D-ribitylamino)uracil = 6,7-dimethyl-8-(1-D-ribityl)lumazine + phosphate + 2 H2O + H(+). It functions in the pathway cofactor biosynthesis; riboflavin biosynthesis; riboflavin from 2-hydroxy-3-oxobutyl phosphate and 5-amino-6-(D-ribitylamino)uracil: step 1/2. Its function is as follows. Catalyzes the formation of 6,7-dimethyl-8-ribityllumazine by condensation of 5-amino-6-(D-ribitylamino)uracil with 3,4-dihydroxy-2-butanone 4-phosphate. This is the penultimate step in the biosynthesis of riboflavin. The chain is 6,7-dimethyl-8-ribityllumazine synthase from Yersinia enterocolitica serotype O:8 / biotype 1B (strain NCTC 13174 / 8081).